A 99-amino-acid polypeptide reads, in one-letter code: Aspartyl/glutamyl-tRNA(Asn/Gln) amidotransferase subunit C (99 aa).

Belongs to the GatC family. In terms of assembly, heterotrimer of A, B and C subunits.

It carries out the reaction L-glutamyl-tRNA(Gln) + L-glutamine + ATP + H2O = L-glutaminyl-tRNA(Gln) + L-glutamate + ADP + phosphate + H(+). The catalysed reaction is L-aspartyl-tRNA(Asn) + L-glutamine + ATP + H2O = L-asparaginyl-tRNA(Asn) + L-glutamate + ADP + phosphate + 2 H(+). In terms of biological role, allows the formation of correctly charged Asn-tRNA(Asn) or Gln-tRNA(Gln) through the transamidation of misacylated Asp-tRNA(Asn) or Glu-tRNA(Gln) in organisms which lack either or both of asparaginyl-tRNA or glutaminyl-tRNA synthetases. The reaction takes place in the presence of glutamine and ATP through an activated phospho-Asp-tRNA(Asn) or phospho-Glu-tRNA(Gln). This chain is Aspartyl/glutamyl-tRNA(Asn/Gln) amidotransferase subunit C, found in Orientia tsutsugamushi (strain Ikeda) (Rickettsia tsutsugamushi).